A 519-amino-acid polypeptide reads, in one-letter code: Transcription factor STP1 (519 aa).

The segment at 16–35 (IPGKIYAFFRELVSGVIISK) is i. Basic and acidic residues predominate over residues 47–61 (ATKEEGKDAADEEKT). Disordered stretches follow at residues 47 to 69 (ATKEEGKDAADEEKTTTSLFPES) and 115 to 150 (LLGSRPEQDTGAPIKMSTGVTSSPLSPSGSTPEHST). The segment at 65–97 (LFPESNNIDRSLNGGCSVIPCSMDVSDLNTPIS) is II. Over residues 131–146 (STGVTSSPLSPSGSTP) the composition is skewed to low complexity. A C2H2-type 1 zinc finger spans residues 160–182 (FICHYCDATFRIRGYLTRHIKKH). The segment at 188-223 (YHCPFFNSATPPDLRCHNSGGFSRRDTYKTHLKARH) adopts a C2H2-type 2; atypical zinc-finger fold. A C2H2-type 3; atypical zinc finger spans residues 240-265 (GHCAQCGEYFSTIENFVENHIESGDC). A disordered region spans residues 357-382 (IKKKQQQVSGSTVTTPEVATQNNQEV). Over residues 364–381 (VSGSTVTTPEVATQNNQE) the composition is skewed to polar residues.

As to quaternary structure, interacts (via Region II) with SSY5; protease component of the SPS-sensor. In terms of processing, phosphorylated by casein kinase I. Phosphorylation is not dependent on the extracellular amino acid levels, but is a prerequisite for proteolytic processing. Post-translationally, activated by the amino acid-induced proteolytic removal of an N-terminal inhibitory domain by serine protease SSY5, an intrinsic component of the SPS-sensor. Processing requires at least 2 components of the SCF(GRR1) ubiquitin ligase complex, namely the F-box protein GRR1 and the E2 enzyme CDC34, but does not depend on the proteasome. Processing is negatively regulated by the protein phosphatase 2A regulatory subunit RTS1.

The protein resides in the cell membrane. Its subcellular location is the nucleus. Its function is as follows. Transcription factor involved in the regulation of gene expression in response to extracellular amino acid levels. Synthesized as latent cytoplasmic precursor, which, upon a signal initiated by the plasma membrane SPS (SSY1-PTR3-SSY5) amino acid sensor system, becomes proteolytically activated and relocates to the nucleus, where it induces the expression of SPS-sensor-regulated genes, including the amino-acid permeases AGP1, BAP2, BAP3 and GNP1. Binding to promoters is facilitated by DAL81. Involved in the repression of genes subject to nitrogen catabolite repression and genes involved in stress response. Negatively regulated by inner nuclear membrane proteins ASI1, ASI2 and ASI3, which prevent unprocessed precursor forms that escape cytoplasmic anchoring from inducing SPS-sensor-regulated genes. May be involved in pre-tRNA splicing. The polypeptide is Transcription factor STP1 (STP1) (Saccharomyces cerevisiae (strain RM11-1a) (Baker's yeast)).